Reading from the N-terminus, the 349-residue chain is Cobalt-precorrin-5B C(1)-methyltransferase (349 aa).

The protein belongs to the CbiD family.

The catalysed reaction is Co-precorrin-5B + S-adenosyl-L-methionine = Co-precorrin-6A + S-adenosyl-L-homocysteine. It participates in cofactor biosynthesis; adenosylcobalamin biosynthesis; cob(II)yrinate a,c-diamide from sirohydrochlorin (anaerobic route): step 6/10. Catalyzes the methylation of C-1 in cobalt-precorrin-5B to form cobalt-precorrin-6A. This Saccharolobus solfataricus (strain ATCC 35092 / DSM 1617 / JCM 11322 / P2) (Sulfolobus solfataricus) protein is Cobalt-precorrin-5B C(1)-methyltransferase.